Here is a 450-residue protein sequence, read N- to C-terminus: Exodeoxyribonuclease 7 large subunit (450 aa).

The protein belongs to the XseA family. Heterooligomer composed of large and small subunits.

It is found in the cytoplasm. The catalysed reaction is Exonucleolytic cleavage in either 5'- to 3'- or 3'- to 5'-direction to yield nucleoside 5'-phosphates.. Functionally, bidirectionally degrades single-stranded DNA into large acid-insoluble oligonucleotides, which are then degraded further into small acid-soluble oligonucleotides. This is Exodeoxyribonuclease 7 large subunit from Rickettsia felis (strain ATCC VR-1525 / URRWXCal2) (Rickettsia azadi).